The primary structure comprises 840 residues: Probable alpha-glucuronidase A (840 aa).

An N-terminal signal peptide occupies residues 1-19 (MWSGIPVFALLSSIGIAAA). Asn50, Asn149, Asn222, Asn262, Asn279, Asn310, Asn465, Asn527, Asn576, Asn610, Asn682, Asn723, and Asn732 each carry an N-linked (GlcNAc...) asparagine glycan.

Belongs to the glycosyl hydrolase 67 family.

Its subcellular location is the secreted. It carries out the reaction an alpha-D-glucuronoside + H2O = D-glucuronate + an alcohol. Its function is as follows. Alpha-glucuronidase involved in the hydrolysis of xylan, a major structural heterogeneous polysaccharide found in plant biomass representing the second most abundant polysaccharide in the biosphere, after cellulose. Releases 4-O-methylglucuronic acid from xylan. The polypeptide is Probable alpha-glucuronidase A (aguA) (Neosartorya fischeri (strain ATCC 1020 / DSM 3700 / CBS 544.65 / FGSC A1164 / JCM 1740 / NRRL 181 / WB 181) (Aspergillus fischerianus)).